The following is a 319-amino-acid chain: tRNA-cytidine(32) 2-sulfurtransferase (319 aa).

The PP-loop motif signature appears at 43–48; it reads SGGKDS. 3 residues coordinate [4Fe-4S] cluster: Cys-118, Cys-121, and Cys-209.

Belongs to the TtcA family. In terms of assembly, homodimer. Mg(2+) serves as cofactor. The cofactor is [4Fe-4S] cluster.

The protein localises to the cytoplasm. The catalysed reaction is cytidine(32) in tRNA + S-sulfanyl-L-cysteinyl-[cysteine desulfurase] + AH2 + ATP = 2-thiocytidine(32) in tRNA + L-cysteinyl-[cysteine desulfurase] + A + AMP + diphosphate + H(+). It participates in tRNA modification. Functionally, catalyzes the ATP-dependent 2-thiolation of cytidine in position 32 of tRNA, to form 2-thiocytidine (s(2)C32). The sulfur atoms are provided by the cysteine/cysteine desulfurase (IscS) system. In Neisseria meningitidis serogroup C (strain 053442), this protein is tRNA-cytidine(32) 2-sulfurtransferase.